A 111-amino-acid polypeptide reads, in one-letter code: uncharacterized protein (111 aa).

The disordered stretch occupies residues 66–94; the sequence is PVPTATPSLPRSGFTSSAKKIKESRKQKS. Residues 70–83 show a composition bias toward polar residues; the sequence is ATPSLPRSGFTSSA.

It is found in the plastid. The protein resides in the chloroplast. This is an uncharacterized protein from Chlamydomonas reinhardtii (Chlamydomonas smithii).